The chain runs to 37 residues: Chorion class CB protein PCH12 (37 aa).

Residues 1–26 (DGIFPTVGAGDVWYGCGDGAVGIVAE) are central domain. Positions 27–37 (TPFASTTTNPA) are right arm.

This sequence belongs to the chorion protein family.

Its function is as follows. This protein is one of many from the eggshell of the silk moth. The polypeptide is Chorion class CB protein PCH12 (Antheraea polyphemus (Polyphemus moth)).